The chain runs to 141 residues: ATP synthase epsilon chain (141 aa).

It belongs to the ATPase epsilon chain family. In terms of assembly, F-type ATPases have 2 components, CF(1) - the catalytic core - and CF(0) - the membrane proton channel. CF(1) has five subunits: alpha(3), beta(3), gamma(1), delta(1), epsilon(1). CF(0) has three main subunits: a, b and c.

The protein localises to the cell inner membrane. In terms of biological role, produces ATP from ADP in the presence of a proton gradient across the membrane. This is ATP synthase epsilon chain from Pseudomonas syringae pv. syringae (strain B728a).